Consider the following 344-residue polypeptide: Uroporphyrinogen decarboxylase (344 aa).

Substrate-binding positions include 26–30 (RQAGR), aspartate 76, tyrosine 152, serine 207, and histidine 323.

The protein belongs to the uroporphyrinogen decarboxylase family. In terms of assembly, homodimer.

The protein localises to the cytoplasm. It carries out the reaction uroporphyrinogen III + 4 H(+) = coproporphyrinogen III + 4 CO2. Its pathway is porphyrin-containing compound metabolism; protoporphyrin-IX biosynthesis; coproporphyrinogen-III from 5-aminolevulinate: step 4/4. Catalyzes the decarboxylation of four acetate groups of uroporphyrinogen-III to yield coproporphyrinogen-III. This is Uroporphyrinogen decarboxylase from Hyphomonas neptunium (strain ATCC 15444).